We begin with the raw amino-acid sequence, 64 residues long: Large ribosomal subunit protein bL35 (64 aa).

It belongs to the bacterial ribosomal protein bL35 family.

The chain is Large ribosomal subunit protein bL35 from Vibrio vulnificus (strain CMCP6).